The chain runs to 514 residues: Serine/threonine-protein kinase 33 (514 aa).

A compositionally biased stretch (basic and acidic residues) spans Ile65 to Ala86. The segment at Ile65–Trp91 is disordered. Positions Tyr116–Leu381 constitute a Protein kinase domain. Residues Leu122–Val130 and Lys145 each bind ATP. Residue Asp238 is the Proton acceptor of the active site. Disordered regions lie at residues Lys402 to Ser468 and Met485 to Leu514. Ser407 is subject to Phosphoserine. Residues Thr413–Lys426 are compositionally biased toward basic and acidic residues. Positions Ser449 to Ser468 are enriched in polar residues.

This sequence belongs to the protein kinase superfamily. CAMK Ser/Thr protein kinase family. CaMK subfamily. As to quaternary structure, homodimer. In terms of processing, autophosphorylated. As to expression, highly expressed in testis, fetal lung and heart, followed by pituitary gland, kidney, interventricular septum, pancreas, heart, trachea, thyroid gland and uterus. Weak hybridization signals were observed in the following tissues: amygdala, aorta, esophagus, colon ascending, colon transverse, skeletal muscle, spleen, peripheral blood leukocyte, lymph node, bone marrow, placenta, prostate, liver, salivary gland, mammary gland, some tumor cell lines, fetal brain, fetal liver, fetal spleen and fetal thymus. No signal at all was detectable in RNA from tissues of the nervous system.

The protein resides in the cytoplasm. It localises to the cytoskeleton. The protein localises to the perinuclear region. It carries out the reaction L-seryl-[protein] + ATP = O-phospho-L-seryl-[protein] + ADP + H(+). The catalysed reaction is L-threonyl-[protein] + ATP = O-phospho-L-threonyl-[protein] + ADP + H(+). With respect to regulation, specifically inhibited by CDD-2807 ((3-([1,1'-Biphenyl]-2-ylethynyl)-1H-indazol-5-yl)(2,6-diazaspiro[3.5]nonan-2-yl)methanone). Functionally, serine/threonine protein kinase required for spermatid differentiation and male fertility. Promotes sperm flagella assembly during spermatogenesis by mediating phosphorylation of fibrous sheath proteins AKAP3 and AKAP4. Also phosphorylates vimentin/VIM, thereby regulating the dynamic behavior of the intermediate filament cytoskeleton. The chain is Serine/threonine-protein kinase 33 from Homo sapiens (Human).